Consider the following 228-residue polypeptide: Claudin-10 (228 aa).

Residues 1-21 traverse the membrane as a helical segment; sequence MASTASEIIAFMVSISGWVLV. The Extracellular segment spans residues 22 to 80; that stretch reads SSTLPTDYWKVSTIDGTVITTATYWANLWKACVTDSTGVSNCKDFPSMLALDGYIQACR. Residues 81–101 traverse the membrane as a helical segment; sequence GLMIAAVSLGFFGSIFALFGM. Topologically, residues 102 to 115 are cytoplasmic; sequence KCTKVGGSDKAKAK. Residues 116-136 form a helical membrane-spanning segment; the sequence is IACLAGIVFILSGLCSMTGCS. Residues 137 to 160 are Extracellular-facing; the sequence is LYANKITTEFFDPLFVEQKYELGA. A helical transmembrane segment spans residues 161–181; it reads ALFIGWAGASLCIIGGVIFCF. Over 182 to 228 the chain is Cytoplasmic; sequence SISDNNKTPRYAYNGATSVMSSRTKYHGGEDFKTTNPSKQFDKNAYV.

Belongs to the claudin family. Can form homodimers both in trans (interaction between CLDN10 molecules in opposing membranes) and in cis (interaction between CLDN10 molecules within one membrane). Interacts with CLDN19.

It localises to the cell junction. It is found in the tight junction. The protein resides in the cell membrane. It catalyses the reaction Na(+)(in) = Na(+)(out). It carries out the reaction Li(+)(in) = Li(+)(out). The catalysed reaction is K(+)(in) = K(+)(out). The enzyme catalyses Rb(+)(in) = Rb(+)(out). It catalyses the reaction Cs(+)(in) = Cs(+)(out). It carries out the reaction NH4(+)(in) = NH4(+)(out). The catalysed reaction is methylamine(out) = methylamine(in). The enzyme catalyses Mg(2+)(in) = Mg(2+)(out). It catalyses the reaction Ca(2+)(in) = Ca(2+)(out). It carries out the reaction Sr(2+)(in) = Sr(2+)(out). The catalysed reaction is chloride(in) = chloride(out). The enzyme catalyses nitrate(in) = nitrate(out). Functionally, forms paracellular channels: polymerizes in tight junction strands with cation- and anion-selective channels through the strands, conveying epithelial permeability in a process known as paracellular tight junction permeability. In sweat glands and in the thick ascending limb (TAL) of Henle's loop in kidney, it controls paracellular sodium permeability which is essential for proper sweat production and renal function. In renal proximal tubules, it conveys selective chloride over hydrogencarbonate anion permeability which is required for renal chloride reabsorption and salt homeostasis. This is Claudin-10 (CLDN10) from Pongo abelii (Sumatran orangutan).